Consider the following 314-residue polypeptide: Hydroxyethylthiazole kinase (314 aa).

Over residues 1 to 13 (MSNSASSFADVSS) the composition is skewed to low complexity. A disordered region spans residues 1-24 (MSNSASSFADVSSGCTAGTPVPAD). M70 contacts substrate. 2 residues coordinate ATP: R145 and S217. G244 is a substrate binding site.

The protein belongs to the Thz kinase family. Mg(2+) serves as cofactor.

The catalysed reaction is 5-(2-hydroxyethyl)-4-methylthiazole + ATP = 4-methyl-5-(2-phosphooxyethyl)-thiazole + ADP + H(+). Its pathway is cofactor biosynthesis; thiamine diphosphate biosynthesis; 4-methyl-5-(2-phosphoethyl)-thiazole from 5-(2-hydroxyethyl)-4-methylthiazole: step 1/1. In terms of biological role, catalyzes the phosphorylation of the hydroxyl group of 4-methyl-5-beta-hydroxyethylthiazole (THZ). The sequence is that of Hydroxyethylthiazole kinase from Bifidobacterium longum subsp. infantis (strain ATCC 15697 / DSM 20088 / JCM 1222 / NCTC 11817 / S12).